Reading from the N-terminus, the 202-residue chain is Ribonuclease HII (202 aa).

The RNase H type-2 domain occupies 1-195 (MIVAGVDEVG…PELKGGSPAG (195 aa)). Positions 7, 8, and 103 each coordinate a divalent metal cation.

It belongs to the RNase HII family. Requires Mn(2+) as cofactor. Mg(2+) is required as a cofactor.

The protein resides in the cytoplasm. It carries out the reaction Endonucleolytic cleavage to 5'-phosphomonoester.. Its function is as follows. Endonuclease that specifically degrades the RNA of RNA-DNA hybrids. This is Ribonuclease HII from Synechococcus sp. (strain RCC307).